A 513-amino-acid polypeptide reads, in one-letter code: uncharacterized protein (513 aa).

Belongs to the NodU/CmcH family.

This is an uncharacterized protein from Methanocaldococcus jannaschii (strain ATCC 43067 / DSM 2661 / JAL-1 / JCM 10045 / NBRC 100440) (Methanococcus jannaschii).